A 135-amino-acid polypeptide reads, in one-letter code: ATP synthase epsilon chain, chloroplastic (135 aa).

This sequence belongs to the ATPase epsilon chain family. As to quaternary structure, F-type ATPases have 2 components, CF(1) - the catalytic core - and CF(0) - the membrane proton channel. CF(1) has five subunits: alpha(3), beta(3), gamma(1), delta(1), epsilon(1). CF(0) has three main subunits: a, b and c.

The protein localises to the plastid. It localises to the chloroplast thylakoid membrane. Functionally, produces ATP from ADP in the presence of a proton gradient across the membrane. The chain is ATP synthase epsilon chain, chloroplastic from Euglena gracilis.